The primary structure comprises 203 residues: Glycerol-3-phosphate acyltransferase (203 aa).

6 helical membrane-spanning segments follow: residues 3–23, 61–81, 87–107, 118–138, 144–164, and 172–192; these read NLIL…LILA, ILTV…ASFL, VLWT…FLGF, GVLA…WFLV, ISSL…FIIH, and THAP…PNIV.

It belongs to the PlsY family. Probably interacts with PlsX.

The protein localises to the cell inner membrane. It carries out the reaction an acyl phosphate + sn-glycerol 3-phosphate = a 1-acyl-sn-glycero-3-phosphate + phosphate. It functions in the pathway lipid metabolism; phospholipid metabolism. Catalyzes the transfer of an acyl group from acyl-phosphate (acyl-PO(4)) to glycerol-3-phosphate (G3P) to form lysophosphatidic acid (LPA). This enzyme utilizes acyl-phosphate as fatty acyl donor, but not acyl-CoA or acyl-ACP. The chain is Glycerol-3-phosphate acyltransferase from Campylobacter concisus (strain 13826).